The following is a 710-amino-acid chain: Protein-glutamine gamma-glutamyltransferase Z (710 aa).

Catalysis depends on residues Cys279, His338, and Asp361. Residues Asn401, Asp403, Glu450, and Glu455 each coordinate Ca(2+).

This sequence belongs to the transglutaminase superfamily. Transglutaminase family. Ca(2+) serves as cofactor. Widely expressed.

It catalyses the reaction L-glutaminyl-[protein] + L-lysyl-[protein] = [protein]-L-lysyl-N(6)-5-L-glutamyl-[protein] + NH4(+). Functionally, catalyzes the cross-linking of proteins and the conjugation of polyamines to proteins. In Homo sapiens (Human), this protein is Protein-glutamine gamma-glutamyltransferase Z (TGM7).